Consider the following 437-residue polypeptide: Cytochrome b (437 aa).

The chain crosses the membrane as a helical span at residues 45–65 (WIWGIVLAFTLVLQIVTGIVL). Heme b-binding residues include His-97 and His-111. The next 9 membrane-spanning stretches (helical) occupy residues 100-120 (GASL…YYGS), 129-149 (WIVG…GYVL), 156-176 (FWGA…GPSI), 194-214 (FFSL…IHIW), 248-268 (FVIK…AVVA), 298-318 (FLPF…VILV), 330-350 (FFGV…PWLD), 365-385 (MWFW…AMPT), and 391-411 (WISL…LPLL). Residues His-198 and His-212 each coordinate heme b.

This sequence belongs to the cytochrome b family. In terms of assembly, the main subunits of complex b-c1 are: cytochrome b, cytochrome c1 and the Rieske protein. Heme b serves as cofactor.

Its subcellular location is the cell membrane. Component of the ubiquinol-cytochrome c reductase complex (complex III or cytochrome b-c1 complex), which is a respiratory chain that generates an electrochemical potential coupled to ATP synthesis. In Rhodobacter capsulatus (Rhodopseudomonas capsulata), this protein is Cytochrome b (petB).